A 321-amino-acid polypeptide reads, in one-letter code: Acetyl-coenzyme A carboxylase carboxyl transferase subunit alpha (321 aa).

Positions 39–293 constitute a CoA carboxyltransferase C-terminal domain; the sequence is RLEVKSQALT…KRALAEALRQ (255 aa).

The protein belongs to the AccA family. In terms of assembly, acetyl-CoA carboxylase is a heterohexamer composed of biotin carboxyl carrier protein (AccB), biotin carboxylase (AccC) and two subunits each of ACCase subunit alpha (AccA) and ACCase subunit beta (AccD).

It localises to the cytoplasm. The catalysed reaction is N(6)-carboxybiotinyl-L-lysyl-[protein] + acetyl-CoA = N(6)-biotinyl-L-lysyl-[protein] + malonyl-CoA. Its pathway is lipid metabolism; malonyl-CoA biosynthesis; malonyl-CoA from acetyl-CoA: step 1/1. Its function is as follows. Component of the acetyl coenzyme A carboxylase (ACC) complex. First, biotin carboxylase catalyzes the carboxylation of biotin on its carrier protein (BCCP) and then the CO(2) group is transferred by the carboxyltransferase to acetyl-CoA to form malonyl-CoA. The chain is Acetyl-coenzyme A carboxylase carboxyl transferase subunit alpha from Azoarcus sp. (strain BH72).